The sequence spans 375 residues: Probable L-tyrosine/L-aspartate decarboxylase (375 aa).

The residue at position 226 (Lys226) is an N6-(pyridoxal phosphate)lysine.

This sequence belongs to the group II decarboxylase family. MfnA subfamily. Pyridoxal 5'-phosphate serves as cofactor.

It carries out the reaction L-tyrosine + H(+) = tyramine + CO2. The enzyme catalyses L-aspartate + H(+) = beta-alanine + CO2. It participates in cofactor biosynthesis; methanofuran biosynthesis. Its pathway is cofactor biosynthesis; coenzyme A biosynthesis. In terms of biological role, catalyzes the decarboxylation of L-tyrosine to produce tyramine for methanofuran biosynthesis. Can also catalyze the decarboxylation of L-aspartate to produce beta-alanine for coenzyme A (CoA) biosynthesis. The polypeptide is Probable L-tyrosine/L-aspartate decarboxylase (Methanocella arvoryzae (strain DSM 22066 / NBRC 105507 / MRE50)).